Reading from the N-terminus, the 366-residue chain is 3-dehydroquinate synthase (366 aa).

NAD(+)-binding positions include 75–80 (DGEQYK), 109–113 (GVIGD), 133–134 (TT), Lys-146, Lys-155, and 173–176 (CLST). Residues Glu-188, His-251, and His-268 each contribute to the Zn(2+) site.

The protein belongs to the sugar phosphate cyclases superfamily. Dehydroquinate synthase family. NAD(+) is required as a cofactor. Requires Co(2+) as cofactor. It depends on Zn(2+) as a cofactor.

The protein resides in the cytoplasm. The catalysed reaction is 7-phospho-2-dehydro-3-deoxy-D-arabino-heptonate = 3-dehydroquinate + phosphate. The protein operates within metabolic intermediate biosynthesis; chorismate biosynthesis; chorismate from D-erythrose 4-phosphate and phosphoenolpyruvate: step 2/7. In terms of biological role, catalyzes the conversion of 3-deoxy-D-arabino-heptulosonate 7-phosphate (DAHP) to dehydroquinate (DHQ). This Vibrio parahaemolyticus serotype O3:K6 (strain RIMD 2210633) protein is 3-dehydroquinate synthase.